The following is a 154-amino-acid chain: Transcriptional repressor NrdR (154 aa).

A zinc finger lies at 3-34 (CPFCRHPDSRVVDSRETDEGQAIRRRRSCPEC). One can recognise an ATP-cone domain in the interval 46–136 (LAVVKRSGVT…VYRSFSSAED (91 aa)).

The protein belongs to the NrdR family. Requires Zn(2+) as cofactor.

In terms of biological role, negatively regulates transcription of bacterial ribonucleotide reductase nrd genes and operons by binding to NrdR-boxes. The protein is Transcriptional repressor NrdR of Mycolicibacterium vanbaalenii (strain DSM 7251 / JCM 13017 / BCRC 16820 / KCTC 9966 / NRRL B-24157 / PYR-1) (Mycobacterium vanbaalenii).